A 115-amino-acid chain; its full sequence is NADH-ubiquinone oxidoreductase chain 3 (115 aa).

The next 3 membrane-spanning stretches (helical) occupy residues 3 to 23 (FVLALTVNTLLALLLMTITFW), 55 to 75 (FFLVAITFLLFDLEIALLLPL), and 84 to 104 (LPLMTTSSLMLIIILALGLTY).

The protein belongs to the complex I subunit 3 family. As to quaternary structure, core subunit of respiratory chain NADH dehydrogenase (Complex I) which is composed of 45 different subunits. Interacts with TMEM186. Interacts with TMEM242.

The protein resides in the mitochondrion inner membrane. The catalysed reaction is a ubiquinone + NADH + 5 H(+)(in) = a ubiquinol + NAD(+) + 4 H(+)(out). Core subunit of the mitochondrial membrane respiratory chain NADH dehydrogenase (Complex I) which catalyzes electron transfer from NADH through the respiratory chain, using ubiquinone as an electron acceptor. Essential for the catalytic activity of complex I. In Pongo abelii (Sumatran orangutan), this protein is NADH-ubiquinone oxidoreductase chain 3.